Consider the following 30-residue polypeptide: Alpha-conotoxin EIVA (30 aa).

Cystine bridges form between cysteine 2-cysteine 16, cysteine 3-cysteine 11, and cysteine 14-cysteine 24. 5 positions are modified to 4-hydroxyproline: proline 7, proline 13, proline 21, proline 22, and proline 27. Glycine 30 carries the post-translational modification Glycine amide.

In terms of tissue distribution, expressed by the venom duct.

Its subcellular location is the secreted. Functionally, alpha-conotoxins act on postsynaptic membranes, they bind to the nicotinic acetylcholine receptors (nAChR) and thus inhibit them. This toxin binds with high affinity to both fetal (alpha-1-beta-1-epsilon-delta (CHRNA1-CHRNB1-CHRND-CHRNE) subunits) and adult (alpha-1/beta-1/gamma/delta subunits) mammalian muscle nicotinic acetylcholine receptors (nAChR). This is Alpha-conotoxin EIVA from Conus ermineus (Agate cone).